A 356-amino-acid chain; its full sequence is MKYLYLEITSRCNLRCEMCFKQHWEDEEGDMDYDLFLKILDDAEKFPELKMIYFGGIGEPTVHPRFMDMVREVKKRGFALGISTNGTLLTDEMLKELAELGVDLVYFSMDVLPTAQNVVTLGHILAGVTAEKIKKLVKYREEVGTHKPSIGVEVVVTKENYKQLPELARYLLNLGVDAMLVSNLLPLTPEQVNDIVYDGSIDMTPIVNELYKIAHNGLYIKLPYFELKTERVCDFDENKVAVIRWDGEVVPCYRFLHTYREYIFGREKKVNTYSFGNVREKSLADIWTSERYTWFRFITKNYLYPSCTDCSLRDACDFVKTTDIDCWGNEPSCADCLWSRRIVMCPIPQYNFGKFL.

One can recognise a Radical SAM core domain in the interval Met1–Ala214. Cys12, Cys16, and Cys19 together coordinate [4Fe-4S] cluster.

This sequence belongs to the radical SAM superfamily. [4Fe-4S] cluster serves as cofactor.

Functionally, involved in the biosynthesis of a molybdopterin-based tungsten cofactor. The protein is Tungsten-containing aldehyde ferredoxin oxidoreductase cofactor-modifying protein (cmo) of Pyrococcus furiosus (strain ATCC 43587 / DSM 3638 / JCM 8422 / Vc1).